A 141-amino-acid chain; its full sequence is Photosystem II protein PSBR, chloroplastic (141 aa).

Residues 1–27 (MATMQISAKGLAPLRPRVSSRRVVKPV) constitute a chloroplast transit peptide. A phosphothreonine mark is found at threonine 34 and threonine 37. A Phosphoserine modification is found at serine 43. The chain crosses the membrane as a helical span at residues 114–134 (GLIAWAGLVLVLLAVGVNLII).

Belongs to the psbR family.

The protein localises to the plastid. It is found in the chloroplast thylakoid membrane. Associated with the oxygen-evolving complex of photosystem II (PSII). Is required for the stable binding of LHCSR3 to PSII-LHCII supercomplexes and is essential for efficient energy-dependent quenching and the integrity of the PSII-LHCII-LHCSR3 supercomplex under continuous high light. The protein is Photosystem II protein PSBR, chloroplastic of Chlamydomonas reinhardtii (Chlamydomonas smithii).